The chain runs to 75 residues: UPF0291 protein LMOf2365_1322 (75 aa).

A disordered region spans residues 56 to 75 (DPNGTDVTPHKVKQLRKNKH). Residues 65-75 (HKVKQLRKNKH) show a composition bias toward basic residues.

Belongs to the UPF0291 family.

The protein resides in the cytoplasm. This Listeria monocytogenes serotype 4b (strain F2365) protein is UPF0291 protein LMOf2365_1322.